The sequence spans 541 residues: Glutamyl-tRNA(Gln) amidotransferase subunit A, chloroplastic/mitochondrial (541 aa).

Active-site charge relay system residues include Lys-121 and Ser-196. The active-site Acyl-ester intermediate is the Ser-220.

It belongs to the amidase family. GatA subfamily. Subunit of the heterotrimeric GatCAB amidotransferase (AdT) complex, composed of A, B and C subunits.

The protein resides in the mitochondrion. It localises to the plastid. Its subcellular location is the chloroplast stroma. It catalyses the reaction L-glutamyl-tRNA(Gln) + L-glutamine + ATP + H2O = L-glutaminyl-tRNA(Gln) + L-glutamate + ADP + phosphate + H(+). In terms of biological role, allows the formation of correctly charged Gln-tRNA(Gln) through the transamidation of misacylated Glu-tRNA(Gln) in chloroplasts and mitochondria. The reaction takes place in the presence of glutamine and ATP through an activated gamma-phospho-Glu-tRNA(Gln). The polypeptide is Glutamyl-tRNA(Gln) amidotransferase subunit A, chloroplastic/mitochondrial (Sorghum bicolor (Sorghum)).